The chain runs to 430 residues: Dihydroorotase (430 aa).

Zn(2+) is bound by residues His-57 and His-59. Substrate contacts are provided by residues 59–61 (HLR) and Asn-91. Zn(2+) is bound by residues Asp-151, His-178, and His-231. A substrate-binding site is contributed by Asn-277. Asp-304 provides a ligand contact to Zn(2+). Asp-304 is a catalytic residue. Substrate is bound by residues His-308 and 322 to 323 (PG).

This sequence belongs to the metallo-dependent hydrolases superfamily. DHOase family. Class I DHOase subfamily. Zn(2+) serves as cofactor.

It catalyses the reaction (S)-dihydroorotate + H2O = N-carbamoyl-L-aspartate + H(+). Its pathway is pyrimidine metabolism; UMP biosynthesis via de novo pathway; (S)-dihydroorotate from bicarbonate: step 3/3. Functionally, catalyzes the reversible cyclization of carbamoyl aspartate to dihydroorotate. The chain is Dihydroorotase from Mycobacterium leprae (strain TN).